Reading from the N-terminus, the 523-residue chain is L-tyrosine:2-oxoglutarate aminotransferase ucdG (523 aa).

The protein belongs to the class-I pyridoxal-phosphate-dependent aminotransferase family. As to quaternary structure, homodimer. Requires pyridoxal 5'-phosphate as cofactor.

It localises to the cytoplasm. It carries out the reaction L-tyrosine + 2-oxoglutarate = 3-(4-hydroxyphenyl)pyruvate + L-glutamate. The protein operates within secondary metabolite biosynthesis. Functionally, nonribosomal peptide synthetase that mediates the biosynthesis of usterphenyllins and uscandidusins, p-terphenyl derivatives. Within the pathway, ucdG is probably involved in the conversion of L-tyrosine into 4-hydroxyphenylpyruvate (HPPA) as a precursor for the usterphenyllin and uscandidusin biosynthesis. UcdE further prenylates position C-14 of ring C of usterphenyllin B to form usterphenyllin A. The pathway begin with the biosynthesis of 4-hydroxyphenylpyruvate (HPPA) from L-tyrosine, possibly by the aminotransferase ucdG. The nonribosomal peptide synthetase ucdA then condenses two HPPA units to produce atromentin. The key step in this pathway is the reduction and dehydration of atromentin to form a terphenyl triol intermediate, performed by the NAD-dependent dehydrogenase ucdB. Further O-methylation by the methyltransferase ucdC forms terphenyllin carrying two methoxy moieties at C-9 and C-12, and subsequent dihydroxylation at C-3 of ring A and C-15 of ring C by the flavin-dependent oxygenase ucdD leads to 3,15-dihydroxyterphenyllin. Prenylation by ucdE at position C-5 of ring A forms usterphenyllin B, and is followed by a second prenylation at position C-14 of ring C to form usterphenyllin A. The following furan ring formation that leads to uscandidusins A and B was proven to be an unexpected spontaneous non-enzymatic reaction. This is L-tyrosine:2-oxoglutarate aminotransferase ucdG from Aspergillus ustus.